Here is a 738-residue protein sequence, read N- to C-terminus: Eukaryotic translation initiation factor 3 subunit B (738 aa).

The sufficient for interaction with HCR1 and TIF32 stretch occupies residues 1–120; it reads MCGCVGVISN…LFIQFKTAQM (120 aa). The sufficient for interaction with PIC8 stretch occupies residues 1–245; that stretch reads MCGCVGVISN…GIQSWGGAQF (245 aa). The RRM domain occupies 59 to 146; sequence NFVVVDGAPI…HRLLVNKLSD (88 aa). WD repeat units lie at residues 211-250, 322-360, 363-406, and 537-579; these read PRKG…SISK, QKEM…LLDK, VKID…QTAR, and VVDK…ENVR.

This sequence belongs to the eIF-3 subunit B family. Component of the eukaryotic translation initiation factor 3 (eIF-3) complex.

The protein localises to the cytoplasm. Functionally, RNA-binding component of the eukaryotic translation initiation factor 3 (eIF-3) complex, which is involved in protein synthesis of a specialized repertoire of mRNAs and, together with other initiation factors, stimulates binding of mRNA and methionyl-tRNAi to the 40S ribosome. The eIF-3 complex specifically targets and initiates translation of a subset of mRNAs involved in cell proliferation. In Meyerozyma guilliermondii (strain ATCC 6260 / CBS 566 / DSM 6381 / JCM 1539 / NBRC 10279 / NRRL Y-324) (Yeast), this protein is Eukaryotic translation initiation factor 3 subunit B.